Reading from the N-terminus, the 303-residue chain is Glutathione transport system permease protein GsiD (303 aa).

A run of 6 helical transmembrane segments spans residues 40–60 (AMTA…ARWI), 105–125 (LAAG…LGLL), 144–164 (LFAF…GSGI), 165–185 (ANVI…LVRG), 222–242 (IVVF…SLSF), and 266–286 (VIAP…VLAF). Positions 101–290 (AQISLAAGVF…LTVLAFNLLG (190 aa)) constitute an ABC transmembrane type-1 domain.

The protein belongs to the binding-protein-dependent transport system permease family. As to quaternary structure, the complex is composed of two ATP-binding proteins (GsiA), two transmembrane proteins (GsiC and GsiD) and a solute-binding protein (GsiB).

The protein localises to the cell inner membrane. Part of the ABC transporter complex GsiABCD involved in glutathione import. Probably responsible for the translocation of the substrate across the membrane. In Escherichia coli O157:H7, this protein is Glutathione transport system permease protein GsiD.